Here is a 251-residue protein sequence, read N- to C-terminus: Flap endonuclease Xni (251 aa).

Residue aspartate 104 coordinates Mg(2+). The region spanning 160-249 (VQPQQLPDYW…IDGNLQQLRL (90 aa)) is the 5'-3' exonuclease domain. K(+) is bound by residues leucine 171, alanine 172, proline 180, valine 182, and isoleucine 185. Residues 184–189 (GIGPKS) are interaction with DNA.

The protein belongs to the Xni family. Mg(2+) serves as cofactor. K(+) is required as a cofactor.

Functionally, has flap endonuclease activity. During DNA replication, flap endonucleases cleave the 5'-overhanging flap structure that is generated by displacement synthesis when DNA polymerase encounters the 5'-end of a downstream Okazaki fragment. The protein is Flap endonuclease Xni of Escherichia coli O139:H28 (strain E24377A / ETEC).